A 1217-amino-acid polypeptide reads, in one-letter code: Genetic suppressor element 1 (1217 aa).

Residues Met1–Arg155 form a disordered region. Ser10 bears the Phosphoserine mark. The span at Met15–Pro33 shows a compositional bias: polar residues. Composition is skewed to low complexity over residues Ser43–Ala63 and Gly76–Pro89. Phosphoserine is present on residues Ser84 and Ser95. A compositionally biased stretch (low complexity) spans Val103 to Gly114. Arg305 carries the asymmetric dimethylarginine modification. Residues Glu321–Ala403 are a coiled coil. 2 disordered regions span residues Ser324 to Leu385 and Arg418 to Val465. Over residues Leu331–Leu385 the composition is skewed to basic and acidic residues. A Phosphothreonine modification is found at Thr433. A compositionally biased stretch (low complexity) spans Pro450 to Val465. Residue Lys496 is modified to N6-acetyllysine. 3 disordered regions span residues His526–Ala579, Lys633–Leu675, and Phe699–Pro720. Basic and acidic residues-rich tracts occupy residues Asn551–Pro561 and Lys633–Pro645. A compositionally biased stretch (pro residues) spans Pro711–Pro720. Lys739 bears the N6-acetyllysine mark. Ser766 carries the post-translational modification Phosphoserine. Disordered regions lie at residues Lys807–Pro858, Ala903–Val930, Glu948–Gly981, and Leu1068–Lys1122. Positions Gln813–Leu822 are enriched in basic residues. 2 positions are modified to phosphoserine: Ser826 and Ser828. 2 stretches are compositionally biased toward polar residues: residues Thr831–Ser840 and Thr847–Pro858. The residue at position 857 (Ser857) is a Phosphoserine. Thr907 carries the phosphothreonine modification. Phosphoserine is present on Ser909. The span at Leu1068–Pro1085 shows a compositional bias: polar residues. Acidic residues predominate over residues Arg1099–Glu1117. Ser1101 is subject to Phosphoserine. The stretch at Glu1127 to Ala1201 forms a coiled coil.

In terms of assembly, may be a component of a BHC histone deacetylase complex that contains HDAC1, HDAC2, HMG20B/BRAF35, KDM1A, RCOR1/CoREST, PHF21A/BHC80, ZMYM2, ZNF217, ZMYM3, GSE1 and GTF2I.

In Homo sapiens (Human), this protein is Genetic suppressor element 1 (GSE1).